Here is a 103-residue protein sequence, read N- to C-terminus: Histone H4 (103 aa).

A compositionally biased stretch (gly residues) spans 1–14 (MSGRGKGGKGLGKG). The interval 1-20 (MSGRGKGGKGLGKGGAKRHR) is disordered. Residue serine 2 is modified to N-acetylserine. 2 positions are modified to N6-acetyl-N6-methyllysine; alternate: lysine 6 and lysine 13. Lysine 17 is subject to N6-acetyllysine. The DNA-binding element occupies 17–21 (KRHRK). The residue at position 21 (lysine 21) is an N6-methyllysine.

This sequence belongs to the histone H4 family. As to quaternary structure, the nucleosome is a histone octamer containing two molecules each of H2A, H2B, H3 and H4 assembled in one H3-H4 heterotetramer and two H2A-H2B heterodimers. The octamer wraps approximately 147 bp of DNA.

The protein localises to the nucleus. It localises to the chromosome. Functionally, core component of nucleosome. Nucleosomes wrap and compact DNA into chromatin, limiting DNA accessibility to the cellular machineries which require DNA as a template. Histones thereby play a central role in transcription regulation, DNA repair, DNA replication and chromosomal stability. DNA accessibility is regulated via a complex set of post-translational modifications of histones, also called histone code, and nucleosome remodeling. The protein is Histone H4 of Ascaris suum (Pig roundworm).